The chain runs to 288 residues: Diaminopimelate epimerase (288 aa).

Substrate-binding residues include N14 and N67. The active-site Proton donor is the C76. Substrate is bound by residues 77–78, N166, N199, and 217–218; these read GN and ER. C226 functions as the Proton acceptor in the catalytic mechanism. A substrate-binding site is contributed by 227-228; the sequence is GT.

The protein belongs to the diaminopimelate epimerase family. As to quaternary structure, homodimer.

It localises to the cytoplasm. It catalyses the reaction (2S,6S)-2,6-diaminopimelate = meso-2,6-diaminopimelate. It functions in the pathway amino-acid biosynthesis; L-lysine biosynthesis via DAP pathway; DL-2,6-diaminopimelate from LL-2,6-diaminopimelate: step 1/1. Its function is as follows. Catalyzes the stereoinversion of LL-2,6-diaminopimelate (L,L-DAP) to meso-diaminopimelate (meso-DAP), a precursor of L-lysine and an essential component of the bacterial peptidoglycan. This Bacillus cereus (strain B4264) protein is Diaminopimelate epimerase.